The following is a 249-amino-acid chain: Triosephosphate isomerase (249 aa).

Asparagine 12 and lysine 14 together coordinate substrate. Lysine 14 is modified (N6-acetyllysine). Tyrosine 68 bears the 3'-nitrotyrosine mark. Serine 80 is modified (phosphoserine). Residue histidine 96 is the Electrophile of the active site. Phosphoserine is present on serine 106. Residue lysine 142 forms a Glycyl lysine isopeptide (Lys-Gly) (interchain with G-Cter in SUMO1) linkage. Lysine 149 carries the N6-succinyllysine modification. Lysine 156 carries the post-translational modification N6-acetyllysine; alternate. Lysine 156 carries the N6-succinyllysine; alternate modification. Position 159 is a phosphoserine (serine 159). Glutamate 166 serves as the catalytic Proton acceptor. Threonine 173 is subject to Phosphothreonine. At lysine 194 the chain carries N6-acetyllysine; alternate. Lysine 194 carries the post-translational modification N6-succinyllysine; alternate. Lysine 194 bears the N6-methyllysine; alternate mark. Serine 198 bears the Phosphoserine mark. A 3'-nitrotyrosine modification is found at tyrosine 209. Serine 212 is subject to Phosphoserine. Threonine 214 bears the Phosphothreonine mark. The residue at position 223 (serine 223) is a Phosphoserine. At lysine 238 the chain carries N6-acetyllysine.

It belongs to the triosephosphate isomerase family. In terms of assembly, homodimer.

It localises to the cytoplasm. It carries out the reaction dihydroxyacetone phosphate = methylglyoxal + phosphate. The catalysed reaction is D-glyceraldehyde 3-phosphate = dihydroxyacetone phosphate. The protein operates within carbohydrate degradation; glycolysis; D-glyceraldehyde 3-phosphate from glycerone phosphate: step 1/1. It participates in carbohydrate biosynthesis; gluconeogenesis. In terms of biological role, triosephosphate isomerase is an extremely efficient metabolic enzyme that catalyzes the interconversion between dihydroxyacetone phosphate (DHAP) and D-glyceraldehyde-3-phosphate (G3P) in glycolysis and gluconeogenesis. It is also responsible for the non-negligible production of methylglyoxal a reactive cytotoxic side-product that modifies and can alter proteins, DNA and lipids. The polypeptide is Triosephosphate isomerase (TPI1) (Bos taurus (Bovine)).